Here is a 989-residue protein sequence, read N- to C-terminus: MSNSNTTQETLEIMKESEKKLVEESVNKNKFISKTPSKEEIEKESEDTSLRQETQRRTSNHGHARKRAKSNSKLKLVRSLAVCEESSAPFVDGPLETQDIIQLHISCPSDKEEEKSTKDVSEKEDKDKNKEKVPRRMLSRDSSQEYTDSTGIDLHEFLVNTLKKNPRDRMMLLKLEQEILDFINDNNNQFKKFPQMTSYHRMLLHRVAAYFGMDHNVDQTGKAVIINKTSNTRIPEQRFSEHIKDEKNTEFQQRFILKRDDASMDRDDNQIRVPLQDGRRSKSIEEREEEYQRVRERIFARETGQNGYLNDIRGNREGLSRTSSSRQSSTDSELKSLEPRPWSSTDSDGSVRSMRPPVTKASSFSGISILTRGDSIGSSKGGSAGRISRPGMALGAPEVCNQVTSSQSVRGLLPCTAQQQQQQQQQLPALPPTPQQQPPLNNHMISQADDLSNPFGQMSLSRQGSTEAADPSSALFQPPLISQHPQQTSFIMASTGQPLPTSNYSTSSHAPPTQQVLPPQGYMQPPQQIQVSYYSPGQYPNSNQQYRPLSHPVAYSPQRGQQLPQPSQQPGLQPMMPNQQQAAYQGMIGVQQPQNQGLLSNQRSGMGGQMQGLVVQYTPLPSYQVPVGNDSQNVVQPPFQQPMLVPASQSVQGALPAGGVPVYYSMIPPAQQNGTSPSVGFLQPPGSEQYQMPQSPSPCSPPQMPQQYSGVSPSGPGVVVMQLNVPNGPQPPQNPSMVQWSHCKYYSMDQRGQKPGDLYSPESSPQANTQMSSSPVTSPTQSPAPSPVTSLSNVCTGLSPLPVLTQFPRPGGPAQGDGRYSLLGQPLQYNLSICPPLLHGQSAYSVHQGQSGLKHGNRSKRQALKSASTDLGTTDVVLGRVLEVTDLPEGITRTEADKLFTQLAMSGAKIQWLKDAQGLPGGGGGDNGGTAENGRHSDLAALYTIVAVFPSPLAAQNASLRLNNSVSRFKLRVAKKNYDLRILERASSQ.

Disordered stretches follow at residues Glu-23 to Asn-71 and Ser-106 to Thr-147. Positions Pro-36–Arg-56 are enriched in basic and acidic residues. Ser-37 bears the Phosphoserine mark. The span at Thr-58–Asn-71 shows a compositional bias: basic residues. Residues Ser-109 to Ser-143 show a composition bias toward basic and acidic residues. Ser-143 is subject to Phosphoserine. The 64-residue stretch at Arg-169–Thr-232 folds into the R3H domain. Residues Arg-233–Thr-303 enclose the SUZ domain. Disordered stretches follow at residues Asp-267–Glu-288, Asn-306–Pro-390, Thr-416–Pro-479, Ala-493–Gln-524, Gly-674–Val-738, Arg-751–Asn-793, and Gln-848–Ala-867. Residues Asp-277–Glu-288 show a composition bias toward basic and acidic residues. Residues Ser-320–Asp-331 show a composition bias toward low complexity. Phosphoserine occurs at positions 344, 347, and 363. Low complexity predominate over residues Thr-416 to Pro-428. Polar residues-rich tracts occupy residues Pro-454–Thr-466 and Ala-493–Leu-517. Residues Ser-695–Met-704 are compositionally biased toward pro residues. Residues Pro-705–Asn-727 are compositionally biased toward low complexity. Residues Pro-761–Met-771 are compositionally biased toward polar residues. A compositionally biased stretch (low complexity) spans Ser-772–Ser-790. Ser-866 and Ser-868 each carry phosphoserine. Phosphothreonine is present on residues Thr-869 and Thr-873.

Its subcellular location is the nucleus. The sequence is that of R3H domain-containing protein 2 (R3HDM2) from Bos taurus (Bovine).